A 117-amino-acid chain; its full sequence is Cell division protein FtsL (117 aa).

Topologically, residues 1 to 35 (MSNLAYQPEKQQRHAISPEKKVIVKKRASITLGEK) are cytoplasmic. The chain crosses the membrane as a helical span at residues 36–56 (VLLVLFAAAVLSVSLLIVSKA). Residues 57 to 117 (YAAYQTNIEV…KDKKVKNIQE (61 aa)) lie on the Extracellular side of the membrane.

The protein belongs to the FtsL family. In terms of assembly, monomer. Interacts with DivIB and DivIC. Interaction with DivIC stabilizes FtsL against RasP cleavage. Post-translationally, cleaved by RasP. Cleavage is important for turnover and function of FtsL.

The protein resides in the cell membrane. Functionally, essential cell division protein that may play a structural role. Probably involved in the regulation of the timing of cell division. Also required for sporulation. This Bacillus subtilis (strain 168) protein is Cell division protein FtsL.